We begin with the raw amino-acid sequence, 84 residues long: Mu-conotoxin-like Cal 12.2d (84 aa).

The N-terminal stretch at 1-19 (MKLTCVLVVLLLVLPFGDL) is a signal peptide. Positions 20–42 (ITTSNTEDNKRGATPWQNSLKAR) are excised as a propeptide. A 6'-bromotryptophan modification is found at tryptophan 72. Proline 77 bears the 4-hydroxyproline mark. At tryptophan 81 the chain carries 6'-bromotryptophan.

Belongs to the conotoxin O1 superfamily. Post-translationally, contains 4 disulfide bonds. Expressed by the venom duct.

Its subcellular location is the secreted. In terms of biological role, mu-conotoxins block voltage-gated sodium channels. This toxin reversibly blocks voltage-gated sodium channel in cephalopods, with no alteration in the voltage dependence of sodium conductance or on the kinetics of inactivation. This chain is Mu-conotoxin-like Cal 12.2d, found in Californiconus californicus (California cone).